The following is a 359-amino-acid chain: Probable isoaspartyl peptidase/L-asparaginase 3 (359 aa).

Catalysis depends on Thr224, which acts as the Nucleophile. Substrate-binding positions include 252-255 and 275-278; these read RVGD and TGDG.

It belongs to the Ntn-hydrolase family. As to quaternary structure, heterotetramer of two alpha and two beta chains arranged as a dimer of alpha/beta heterodimers. Cleaved into an alpha and beta chain by autocatalysis; this activates the enzyme. The N-terminal residue of the beta subunit is responsible for the nucleophile hydrolase activity.

The enzyme catalyses Cleavage of a beta-linked Asp residue from the N-terminus of a polypeptide.. In terms of biological role, acts in asparagine catabolism but also in the final steps of protein degradation via hydrolysis of a range of isoaspartyl dipeptides. This Arabidopsis thaliana (Mouse-ear cress) protein is Probable isoaspartyl peptidase/L-asparaginase 3.